Reading from the N-terminus, the 163-residue chain is SsrA-binding protein (163 aa).

Belongs to the SmpB family.

It is found in the cytoplasm. Its function is as follows. Required for rescue of stalled ribosomes mediated by trans-translation. Binds to transfer-messenger RNA (tmRNA), required for stable association of tmRNA with ribosomes. tmRNA and SmpB together mimic tRNA shape, replacing the anticodon stem-loop with SmpB. tmRNA is encoded by the ssrA gene; the 2 termini fold to resemble tRNA(Ala) and it encodes a 'tag peptide', a short internal open reading frame. During trans-translation Ala-aminoacylated tmRNA acts like a tRNA, entering the A-site of stalled ribosomes, displacing the stalled mRNA. The ribosome then switches to translate the ORF on the tmRNA; the nascent peptide is terminated with the 'tag peptide' encoded by the tmRNA and targeted for degradation. The ribosome is freed to recommence translation, which seems to be the essential function of trans-translation. The chain is SsrA-binding protein from Shewanella baltica (strain OS223).